The following is a 95-amino-acid chain: Ribonuclease kappa (95 aa).

2 helical membrane passes run 12–32 (GLII…FFYI) and 68–88 (CWIA…QFYM).

It belongs to the RNase K family.

It is found in the membrane. Its function is as follows. Endoribonuclease. Functionally, (Microbial infection) Required for the initial stages of clathrin-mediated endocytic uptake of a diverse set of flaviviruses, including dengue and West Nile. Not required for clathrin-mediated endocytosis and macropinocytosis. This chain is Ribonuclease kappa, found in Drosophila melanogaster (Fruit fly).